Consider the following 80-residue polypeptide: UPF0154 protein SH1564 (80 aa).

The chain crosses the membrane as a helical span at residues 4–24 (WLAILLIIVALIGGLVGGFFL).

Belongs to the UPF0154 family.

The protein localises to the membrane. The sequence is that of UPF0154 protein SH1564 from Staphylococcus haemolyticus (strain JCSC1435).